A 61-amino-acid chain; its full sequence is Small ribosomal subunit protein uS14 (61 aa).

Zn(2+)-binding residues include C24, C27, C40, and C43.

It belongs to the universal ribosomal protein uS14 family. Zinc-binding uS14 subfamily. In terms of assembly, part of the 30S ribosomal subunit. Contacts proteins S3 and S10. Requires Zn(2+) as cofactor.

Its function is as follows. Binds 16S rRNA, required for the assembly of 30S particles and may also be responsible for determining the conformation of the 16S rRNA at the A site. The sequence is that of Small ribosomal subunit protein uS14 from Macrococcus caseolyticus (strain JCSC5402) (Macrococcoides caseolyticum).